Consider the following 313-residue polypeptide: Proline-rich protein 3 (313 aa).

The N-terminal stretch at 1–22 is a signal peptide; sequence MAITRSSLAICLILSLVTITTA. The segment at 27 to 312 is 35 X 5 AA approximate repeats; it reads PSSPPVYKSP…GPKAAPATPK (286 aa). Tandem repeats lie at residues 30-34, 35-39, 40-43, 44-48, 49-53, 54-57, 58-62, 64-67, 68-72, 73-77, 82-86, 87-91, 92-96, 97-101, 102-105, 106-110, 111-115, 116-120, 121-125, 126-131, 132-136, 137-141, 142-146, 147-150, 151-155, 157-163, 164-168, 169-174, 175-181, 182-186, 187-229, 258-262, 266-270, 298-302, and 308-312.

Belongs to the plant proline-rich protein superfamily. ENOD12 family. Exclusively expressed in roots, particularly in root hairs-containing regions, and especially in root hairs.

The protein localises to the secreted. Its subcellular location is the cell wall. May contribute to cell wall structure in root hairs. The sequence is that of Proline-rich protein 3 (PRP3) from Arabidopsis thaliana (Mouse-ear cress).